Here is a 54-residue protein sequence, read N- to C-terminus: Ovomucoid (54 aa).

The region spanning 4 to 54 is the Kazal-like domain; the sequence is VDCSDYPKPACTVEYMPLCGSDNKTYDNKCNFCNAVVDSNGTLTLSHFGKC. 3 disulfide bridges follow: Cys-6/Cys-36, Cys-14/Cys-33, and Cys-22/Cys-54. Residue Asn-43 is glycosylated (N-linked (GlcNAc...) asparagine).

The protein resides in the secreted. This is Ovomucoid from Anser anser anser (Western greylag goose).